A 681-amino-acid chain; its full sequence is Serine/threonine-protein kinase PAK 6 (681 aa).

Disordered regions lie at residues 1 to 30, 149 to 169, 200 to 256, and 268 to 355; these read MFRKKKKKRPEISAPQNFQHRVHTSFDPKE, GGTPAGHKQMPWPEPQSPRVL, QSSP…ESSL, and TAAT…PRTW. The 14-residue stretch at 12-25 folds into the CRIB domain; sequence ISAPQNFQHRVHTS. The segment at 26-406 is linker; that stretch reads FDPKEGKFVG…VVDQGDPRLL (381 aa). Composition is skewed to low complexity over residues 201-212 and 268-278; these read SSPPGASPPTGT and TAATAPPSSSK. Positions 308-333 are enriched in polar residues; the sequence is SLPSDQPVGTFSPLTTSDTSSPQKSL. Residues 407 to 658 form the Protein kinase domain; that stretch reads LDSYVKIGEG…AQELLDHPFL (252 aa). ATP-binding positions include 413-421 and Lys-436; that span reads IGEGSTGIV. The active-site Proton acceptor is Asp-526. Ser-560 is subject to Phosphoserine; by autocatalysis.

The protein belongs to the protein kinase superfamily. STE Ser/Thr protein kinase family. STE20 subfamily. Interacts tightly with GTP-bound but not GDP-bound CDC42/p21 and RAC1. Interacts with the androgen receptor AR and the estrogen receptor ESR1. Interacts with IQGAP1 and PPM1B. In terms of processing, autophosphorylated. Phosphorylated by MAP2K6//MAPKK6, leading to PAK6 activation. As to expression, selectively expressed in brain and testis, with lower levels in multiple tissues including prostate and breast.

The protein resides in the cytoplasm. It is found in the nucleus. The enzyme catalyses L-seryl-[protein] + ATP = O-phospho-L-seryl-[protein] + ADP + H(+). It catalyses the reaction L-threonyl-[protein] + ATP = O-phospho-L-threonyl-[protein] + ADP + H(+). Its function is as follows. Serine/threonine protein kinase that plays a role in the regulation of gene transcription. The kinase activity is induced by various effectors including AR or MAP2K6/MAPKK6. Phosphorylates the DNA-binding domain of androgen receptor/AR and thereby inhibits AR-mediated transcription. Also inhibits ESR1-mediated transcription. May play a role in cytoskeleton regulation by interacting with IQGAP1. May protect cells from apoptosis through phosphorylation of BAD. This is Serine/threonine-protein kinase PAK 6 (PAK6) from Homo sapiens (Human).